The chain runs to 363 residues: D-alanine--D-alanine ligase (363 aa).

The ATP-grasp domain occupies 148-353 (KKLLAAEGLP…YGTLVSTLIE (206 aa)). Residue 176–231 (RERLGLPVFVKPARAGSSIGITKVDDWAALDTAIAAAREHDPKVIVEAGIVGREVE) coordinates ATP. Positions 308, 320, and 322 each coordinate Mg(2+).

Belongs to the D-alanine--D-alanine ligase family. Requires Mg(2+) as cofactor. The cofactor is Mn(2+).

The protein localises to the cytoplasm. It carries out the reaction 2 D-alanine + ATP = D-alanyl-D-alanine + ADP + phosphate + H(+). It functions in the pathway cell wall biogenesis; peptidoglycan biosynthesis. Cell wall formation. The protein is D-alanine--D-alanine ligase of Nocardia farcinica (strain IFM 10152).